Consider the following 248-residue polypeptide: Adenosylcobinamide-GDP ribazoletransferase (248 aa).

Transmembrane regions (helical) follow at residues 36 to 56 (FFLP…YLGL), 59 to 79 (FLPP…ITGG), 113 to 133 (FGTI…YSLV), 137 to 157 (CSIA…FLCL), 170 to 190 (IFIG…ALAM), and 199 to 219 (ITII…LLCL).

It belongs to the CobS family. Mg(2+) is required as a cofactor.

The protein localises to the cell membrane. It carries out the reaction alpha-ribazole + adenosylcob(III)inamide-GDP = adenosylcob(III)alamin + GMP + H(+). The catalysed reaction is alpha-ribazole 5'-phosphate + adenosylcob(III)inamide-GDP = adenosylcob(III)alamin 5'-phosphate + GMP + H(+). Its pathway is cofactor biosynthesis; adenosylcobalamin biosynthesis; adenosylcobalamin from cob(II)yrinate a,c-diamide: step 7/7. Its function is as follows. Joins adenosylcobinamide-GDP and alpha-ribazole to generate adenosylcobalamin (Ado-cobalamin). Also synthesizes adenosylcobalamin 5'-phosphate from adenosylcobinamide-GDP and alpha-ribazole 5'-phosphate. The polypeptide is Adenosylcobinamide-GDP ribazoletransferase (Clostridium botulinum (strain 657 / Type Ba4)).